Reading from the N-terminus, the 658-residue chain is Glycogen debranching enzyme (658 aa).

Aspartate 335 functions as the Nucleophile in the catalytic mechanism. The active-site Proton donor is glutamate 370. Positions 457–468 (NDANGEGNRDGT) are enriched in basic and acidic residues. Residues 457–478 (NDANGEGNRDGTDSNFSNNHGT) form a disordered region.

It belongs to the glycosyl hydrolase 13 family.

The catalysed reaction is Hydrolysis of (1-&gt;6)-alpha-D-glucosidic linkages to branches with degrees of polymerization of three or four glucose residues in limit dextrin.. It functions in the pathway glycan degradation; glycogen degradation. Functionally, removes maltotriose and maltotetraose chains that are attached by 1,6-alpha-linkage to the limit dextrin main chain, generating a debranched limit dextrin. This chain is Glycogen debranching enzyme, found in Pectobacterium carotovorum subsp. carotovorum (strain PC1).